A 642-amino-acid chain; its full sequence is MQLSWKDIPTVPTSNDMLDIVLNRTQRKTPTVIRAGFKITRIRAFYMRKVKFTCEGFIEKFDDILKGFPNINDVHPFHRDLMDTLYEKNHYKVSLASVSRAKTLVEQVARDYVRLLKFGQSLFQCKQLKRAALGRMATIMKKLKDPLVYLEQVRQHLGRLPSIDPNTRTLLICGYPNVGKSSFLRCITKADVEVQPYAFTTKSLYVGHFDYKYLRFQAIDTPGILDRPTEEMNNIEMQSIYAIAHLRSTVLYFMDLSEQCGFTIEAQVKLFHSIKPLFANKSVMVVINKTDIIRPEDLDEERQEMLKSIMDFPGVEIMTTSCINEENVMAVRNKACEKLLASRIENKLKSQTRITNVLNKIHVAHPQKRDDGVERTPYIPEAFKNVKKYDPEDPERRPLARDIEAENGGAGVFNINLKDSYLLENDEWKNDVMPEILNGRNVYDFLDPDIAAKLQALEEEEERLEAEGFYESDDDAIEGMDDEDVEDIREKAAWIRDKQKKMINAARSRKALKNRGTMPRSKMAKSFEDMEKHMSSLGHNMSALQSKQSAAAAKNRYTESGADIVYGNNESAKTAGKLRQSDRLMDGVADASMRSKADRMAKLHRRERNRQARQGEADRHATASLPKHLFSGKRGIGSNDRR.

The OBG-type G domain maps to 168 to 340 (RTLLICGYPN…VRNKACEKLL (173 aa)). GTP is bound by residues 174-181 (GYPNVGKS), 220-224 (DTPGI), and 288-291 (NKTD). The tract at residues 585-642 (MDGVADASMRSKADRMAKLHRRERNRQARQGEADRHATASLPKHLFSGKRGIGSNDRR) is disordered. Residues 609-621 (NRQARQGEADRHA) show a composition bias toward basic and acidic residues.

This sequence belongs to the TRAFAC class OBG-HflX-like GTPase superfamily. OBG GTPase family. NOG subfamily.

It is found in the nucleus. Its subcellular location is the nucleolus. In terms of biological role, involved in the biogenesis of the 60S ribosomal subunit. In Eremothecium gossypii (strain ATCC 10895 / CBS 109.51 / FGSC 9923 / NRRL Y-1056) (Yeast), this protein is Nucleolar GTP-binding protein 1 (NOG1).